The following is a 122-amino-acid chain: Large ribosomal subunit protein uL14 (122 aa).

Belongs to the universal ribosomal protein uL14 family. In terms of assembly, part of the 50S ribosomal subunit. Forms a cluster with proteins L3 and L19. In the 70S ribosome, L14 and L19 interact and together make contacts with the 16S rRNA in bridges B5 and B8.

In terms of biological role, binds to 23S rRNA. Forms part of two intersubunit bridges in the 70S ribosome. In Sulfurihydrogenibium sp. (strain YO3AOP1), this protein is Large ribosomal subunit protein uL14.